The following is a 172-amino-acid chain: Probable phosphatase YqeG (172 aa).

In terms of biological role, has low dephosphorylation activity on GMP and glucose-6-phosphate. The protein is Probable phosphatase YqeG (yqeG) of Bacillus subtilis (strain 168).